Here is a 498-residue protein sequence, read N- to C-terminus: ATP synthase subunit beta, chloroplastic (498 aa).

A Phosphothreonine modification is found at Thr6. At Ser13 the chain carries Phosphoserine. 172–179 (GGAGVGKT) serves as a coordination point for ATP.

It belongs to the ATPase alpha/beta chains family. As to quaternary structure, F-type ATPases have 2 components, CF(1) - the catalytic core - and CF(0) - the membrane proton channel. CF(1) has five subunits: alpha(3), beta(3), gamma(1), delta(1), epsilon(1). CF(0) has four main subunits: a(1), b(1), b'(1) and c(9-12).

It is found in the plastid. The protein resides in the chloroplast thylakoid membrane. It carries out the reaction ATP + H2O + 4 H(+)(in) = ADP + phosphate + 5 H(+)(out). In terms of biological role, produces ATP from ADP in the presence of a proton gradient across the membrane. The catalytic sites are hosted primarily by the beta subunits. The protein is ATP synthase subunit beta, chloroplastic of Barbarea verna (Land cress).